The sequence spans 222 residues: Ras-related protein RABA4d (222 aa).

A GTP-binding site is contributed by 22-29 (GDSAVGKT). The Effector region motif lies at 44–52 (SKATIGVEF). GTP contacts are provided by residues 70–74 (DTAGQ), 128–131 (NKCD), and 158–159 (SA). Residues cysteine 218 and cysteine 219 are each lipidated (S-geranylgeranyl cysteine).

Belongs to the small GTPase superfamily. Rab family. Interacts with PI4KB1. In terms of tissue distribution, specifically expressed in pollen and localized to the tips of growing pollen tubes.

The protein localises to the cytoplasmic vesicle membrane. Its function is as follows. Intracellular vesicle trafficking and protein transport. Plays an important role in the regulation of pollen tube tip growth. This is Ras-related protein RABA4d (RABA4D) from Arabidopsis thaliana (Mouse-ear cress).